Consider the following 82-residue polypeptide: Small ribosomal subunit protein bS18 (82 aa).

The disordered stretch occupies residues 1–20 (MVDINQIPTRRPFHRRRKTC).

It belongs to the bacterial ribosomal protein bS18 family. As to quaternary structure, part of the 30S ribosomal subunit. Forms a tight heterodimer with protein bS6.

Its function is as follows. Binds as a heterodimer with protein bS6 to the central domain of the 16S rRNA, where it helps stabilize the platform of the 30S subunit. This Mesorhizobium japonicum (strain LMG 29417 / CECT 9101 / MAFF 303099) (Mesorhizobium loti (strain MAFF 303099)) protein is Small ribosomal subunit protein bS18.